Reading from the N-terminus, the 290-residue chain is Nucleotide-binding protein Bpet0443 (290 aa).

9-16 (GISGSGKS) serves as a coordination point for ATP. Residue 58-61 (DVRS) participates in GTP binding.

This sequence belongs to the RapZ-like family.

Its function is as follows. Displays ATPase and GTPase activities. In Bordetella petrii (strain ATCC BAA-461 / DSM 12804 / CCUG 43448), this protein is Nucleotide-binding protein Bpet0443.